The following is a 486-amino-acid chain: MEQEGQEKKKEGRLTLVLALRTLIAAFGSSFQYAYNVSVCNSPSELMTEFYNDTYYDRTGELIDEFPLTLLWSVTVSMFPSGGFAGSLLVGPLVNKFGRKGALLFNNIFSIVPAILMGCSKVARSFELIIISRLLVGICAGVSSNVVPMYLGELAPKNLRGALGVESQLFITLGILVAQIFGLRSIRQQKGWPILLGLTGGPAAAACPPFFPESPRYLLIGQEPRCRQKALQSLRGWDSVDRELEEIRREDEAARAAGLVSVRALCAMRGLAWQLISVVPLMWQQLSGVNAIYYYDQIYLSPLDTDTQYYTAATGAVNVLMTVCTVFVVESWARLLLLLGFSPLAPTCCVLTAALALQDTVSWMPYISIVCIIVYVIGHAIGPAIRSLYTEIFLQSGRPPTWWGQVHWLSNFTVGLVFPLIQWAGLYSFIIFGVACLSTTVYTFLIVPETKGKSFIEIIRRFIRMNKVEVSPDREELKDFPPDVSE.

M1 carries the N-acetylmethionine modification. Residues 1 to 19 (MEQEGQEKKKEGRLTLVLA) are Cytoplasmic-facing. Residues 20 to 40 (LRTLIAAFGSSFQYAYNVSVC) form a helical membrane-spanning segment. A D-fructose-binding site is contributed by Y33. The Extracellular segment spans residues 41 to 69 (NSPSELMTEFYNDTYYDRTGELIDEFPLT). N52 is a glycosylation site (N-linked (GlcNAc...) asparagine). A helical transmembrane segment spans residues 70 to 92 (LLWSVTVSMFPSGGFAGSLLVGP). At 93-99 (LVNKFGR) the chain is on the cytoplasmic side. Residues 100–120 (KGALLFNNIFSIVPAILMGCS) form a helical membrane-spanning segment. Residues 121–127 (KVARSFE) are Extracellular-facing. A helical transmembrane segment spans residues 128–150 (LIIISRLLVGICAGVSSNVVPMY). Over 151-162 (LGELAPKNLRGA) the chain is Cytoplasmic. A helical transmembrane segment spans residues 163–183 (LGVESQLFITLGILVAQIFGL). Q168 lines the D-fructose pocket. At 184-192 (RSIRQQKGW) the chain is on the extracellular side. A helical transmembrane segment spans residues 193–211 (PILLGLTGGPAAAACPPFF). The Cytoplasmic portion of the chain corresponds to 212–274 (PESPRYLLIG…LCAMRGLAWQ (63 aa)). The helical transmembrane segment at 275–294 (LISVVPLMWQQLSGVNAIYY) threads the bilayer. Residues Q284 and 292–294 (IYY) contribute to the D-fructose site. Residues 295–306 (YDQIYLSPLDTD) are Extracellular-facing. A helical membrane pass occupies residues 307–327 (TQYYTAATGAVNVLMTVCTVF). Residues 328–334 (VVESWAR) lie on the Cytoplasmic side of the membrane. The helical transmembrane segment at 335 to 355 (LLLLLGFSPLAPTCCVLTAAL) threads the bilayer. Over 356 to 363 (ALQDTVSW) the chain is Extracellular. A helical membrane pass occupies residues 364 to 385 (MPYISIVCIIVYVIGHAIGPAI). Residue H379 coordinates D-fructose. Over 386-402 (RSLYTEIFLQSGRPPTW) the chain is Cytoplasmic. The chain crosses the membrane as a helical span at residues 403 to 421 (WGQVHWLSNFTVGLVFPLI). Residue 407 to 408 (HW) coordinates D-fructose. The Extracellular segment spans residues 422–426 (QWAGL). Residues 427–447 (YSFIIFGVACLSTTVYTFLIV) form a helical membrane-spanning segment. Over 448-486 (PETKGKSFIEIIRRFIRMNKVEVSPDREELKDFPPDVSE) the chain is Cytoplasmic.

Belongs to the major facilitator superfamily. Sugar transporter (TC 2.A.1.1) family. Glucose transporter subfamily. In terms of tissue distribution, detected in jejunum. Detected at the intestinal brush-border membrane (at protein level). Detected in duodenum, jejunum and kidney.

Its subcellular location is the apical cell membrane. The protein resides in the cell membrane. It localises to the sarcolemma. The catalysed reaction is D-fructose(out) = D-fructose(in). Its function is as follows. Functions as a fructose transporter that has only low activity with other monosaccharides. Can mediate the uptake of deoxyglucose, but with low efficiency. Essential for fructose uptake in the small intestine. Plays a role in the regulation of salt uptake and blood pressure in response to dietary fructose. Required for the development of high blood pressure in response to high dietary fructose intake. In Oryctolagus cuniculus (Rabbit), this protein is Solute carrier family 2, facilitated glucose transporter member 5.